Consider the following 736-residue polypeptide: MLRLLRPLLLLLLLPPPGSPEPPGLTQLSPGAPPQAPDLLYADGLRAYAAGAWAPAVALLREALRSQAALGRVRLDCGASCAADPGAALPAVLLGAPEPDSGPGPTQGSWERQLLRAALRRADCLTQCAARRLGPGGAARLRVGSALRDAFRRREPYNYLQRAYYQLKKLDLAAAAAHTFFVANPMHLQMREDMAKYRRMSGVRPQSFRDLETPPHWAAYDTGLELLGRQEAGLALPRLEEALQGSLAQMESCRADCEGPEEQQGAEEEEDGAASQGGLYEAIAGHWIQVLQCRQRCVGETATRPGRSFPVPDFLPNQLRRLHEAHAQVGNLSQAIENVLSVLLFYPEDEAAKRALNQYQAQLGEPRPGLGPREDIQRFILRSLGEKRQLYYAMEHLGTSFKDPDPWTPAALIPEALREKLREDQEKRPWDHEPVKPKPLTYWKDVLLLEGVTLTQDSRQLNGSERAVLDGLLTPAECGVLLQLAKDAAGAGARSGYRGRRSPHTPHERFEGLTVLKAAQLARAGTVGSQGAKLLLEVSERVRTLTQAYFSPERPLHLSFTHLVCRSAIEGEQEQRMDLSHPVHADNCVLDPDTGECWREPPAYTYRDYSGLLYLNDDFQGGDLFFTEPNALTVTARVRPRCGRLVAFSSGVENPHGVWAVTRGRRCALALWHTWAPEHREQEWIEAKELLQESQEEEEEEEEEMPSKDPSPEPPSRRHQRVQDKTGRAPRVREEL.

The signal sequence occupies residues 1-20 (MLRLLRPLLLLLLLPPPGSP). 3 TPR repeats span residues 37-70 (PDLL…QAAL), 154-187 (REPY…NPMH), and 216-249 (HWAA…SLAQ). Positions 253-275 (CRADCEGPEEQQGAEEEEDGAAS) are disordered. Acidic residues predominate over residues 258 to 272 (EGPEEQQGAEEEEDG). The TPR 4 repeat unit spans residues 316 to 349 (PNQLRRLHEAHAQVGNLSQAIENVLSVLLFYPED). 2 N-linked (GlcNAc...) asparagine glycosylation sites follow: Asn-331 and Asn-462. Residues 561–675 (THLVCRSAIE…RCALALWHTW (115 aa)) enclose the Fe2OG dioxygenase domain. Residues His-584, Asp-586, and His-656 each coordinate Fe cation. Arg-666 is a catalytic residue. Residues 681 to 709 (EQEWIEAKELLQESQEEEEEEEEEMPSKD) are a coiled coil. The disordered stretch occupies residues 689 to 736 (ELLQESQEEEEEEEEEMPSKDPSPEPPSRRHQRVQDKTGRAPRVREEL). Over residues 694 to 704 (SQEEEEEEEEE) the composition is skewed to acidic residues. Over residues 721–736 (RVQDKTGRAPRVREEL) the composition is skewed to basic and acidic residues. The Prevents secretion from ER signature appears at 733-736 (REEL).

It belongs to the leprecan family. In terms of assembly, identified in a complex with PLOD1 and P3H4. Fe cation serves as cofactor. Requires L-ascorbate as cofactor. As to expression, detected in fetal cartilage (at protein level). Weak expression in heart, lung, ovary and skeletal muscle.

The protein localises to the endoplasmic reticulum. The catalysed reaction is L-prolyl-[collagen] + 2-oxoglutarate + O2 = trans-3-hydroxy-L-prolyl-[collagen] + succinate + CO2. Part of a complex composed of PLOD1, P3H3 and P3H4 that catalyzes hydroxylation of lysine residues in collagen alpha chains and is required for normal assembly and cross-linkling of collagen fibrils. Required for normal hydroxylation of lysine residues in type I collagen chains in skin, bone, tendon, aorta and cornea. Required for normal skin stability via its role in hydroxylation of lysine residues in collagen alpha chains and in collagen fibril assembly. Apparently not required for normal prolyl 3-hydroxylation on collagen chains, possibly because it functions redundantly with other prolyl 3-hydroxylases. The polypeptide is Prolyl 3-hydroxylase 3 (Homo sapiens (Human)).